Reading from the N-terminus, the 508-residue chain is Flagellin (508 aa).

This sequence belongs to the bacterial flagellin family.

It localises to the secreted. Its subcellular location is the bacterial flagellum. Functionally, flagellin is the subunit protein which polymerizes to form the filaments of bacterial flagella. This Salmonella berta protein is Flagellin (fliC).